We begin with the raw amino-acid sequence, 177 residues long: Protein FATTY ACID EXPORT 4, chloroplastic (177 aa).

The N-terminal 63 residues, 1-63 (MWSLALTLPS…AELSELAPVV (63 aa)), are a transit peptide targeting the chloroplast. 3 helical membrane passes run 85 to 105 (KGSL…YFLT), 111 to 131 (RVLG…VFGF), and 140 to 160 (VPAG…VMAY).

This sequence belongs to the TMEM14 family.

It localises to the plastid. Its subcellular location is the chloroplast membrane. Functionally, may be involved in free fatty acids export from the plastids. The sequence is that of Protein FATTY ACID EXPORT 4, chloroplastic from Arabidopsis thaliana (Mouse-ear cress).